Consider the following 357-residue polypeptide: Aminomethyltransferase (357 aa).

Belongs to the GcvT family. As to quaternary structure, the glycine cleavage system is composed of four proteins: P, T, L and H.

It carries out the reaction N(6)-[(R)-S(8)-aminomethyldihydrolipoyl]-L-lysyl-[protein] + (6S)-5,6,7,8-tetrahydrofolate = N(6)-[(R)-dihydrolipoyl]-L-lysyl-[protein] + (6R)-5,10-methylene-5,6,7,8-tetrahydrofolate + NH4(+). The glycine cleavage system catalyzes the degradation of glycine. The polypeptide is Aminomethyltransferase (Deinococcus deserti (strain DSM 17065 / CIP 109153 / LMG 22923 / VCD115)).